A 1049-amino-acid polypeptide reads, in one-letter code: Self-sufficient cytochrome P450 monooxygenase CYP505E4 (1049 aa).

Cys-405 serves as a coordination point for heme. Residues 462–492 (ATALSQHNMSAGATSSPGSSAHPAGNKNAQD) are disordered. Residues 471 to 486 (SAGATSSPGSSAHPAG) show a composition bias toward low complexity. The Flavodoxin-like domain occupies 499 to 640 (ISFFYGSNSG…DLEVWEETNL (142 aa)). FMN is bound by residues 505-509 (SNSGT) and 584-616 (VFGC…TRLT). The region spanning 678 to 906 (RDLIEGKVTA…RPAKEAFHLP (229 aa)) is the FAD-binding FR-type domain.

It in the N-terminal section; belongs to the cytochrome P450 family. It depends on FAD as a cofactor. FMN is required as a cofactor. The cofactor is heme.

The catalysed reaction is 2 oxidized [cytochrome P450] + NADPH = 2 reduced [cytochrome P450] + NADP(+) + H(+). It catalyses the reaction an organic molecule + reduced [NADPH--hemoprotein reductase] + O2 = an alcohol + oxidized [NADPH--hemoprotein reductase] + H2O + H(+). It carries out the reaction dodecanoate + reduced [NADPH--hemoprotein reductase] + O2 = 5-hydroxydodecanoate + oxidized [NADPH--hemoprotein reductase] + H2O + H(+). The enzyme catalyses tetradecanoate + reduced [NADPH--hemoprotein reductase] + O2 = 7-hydroxytetradecanoate + oxidized [NADPH--hemoprotein reductase] + H2O + H(+). The catalysed reaction is dodecan-1-ol + reduced [NADPH--hemoprotein reductase] + O2 = 1,5-dodecanediol + oxidized [NADPH--hemoprotein reductase] + H2O + H(+). It catalyses the reaction dodecan-1-ol + reduced [NADPH--hemoprotein reductase] + O2 = 1,4-dodecanediol + oxidized [NADPH--hemoprotein reductase] + H2O + H(+). It carries out the reaction dodecan-1-ol + reduced [NADPH--hemoprotein reductase] + O2 = 1,6-dodecanediol + oxidized [NADPH--hemoprotein reductase] + H2O + H(+). Self-sufficient cytochrome P450 monooxygenase that catalyzes the regioselective in-chain hydroxylation of alkanes, fatty alcohols, and fatty acids at the omega-7 position. Performs hydroxylation of C10-C16 n-alkanes and C12 and C14 fatty alcohols; and thereby enables the one step biocatalytic synthesis of rare alcohols such as 5-dodecanol and 7-tetradecanol. Converts 1-dodecanol into 1,5-dodecanediol as major product with very little sub-terminally hydroxylated products with the 1,4-dodecanediol and 1,6-dodecanediol more abundant. Converts dodecanoic acid to 5-hydroxydodecanoic acid which can be further converted into delta-dodecalactone by lactonization of the 5-hydroxy acid at low pH. Also gives sub-terminal hydroxylation of dodecanoic acid with 9-hydroxydodecanoic acid being the second most abundant product. The protein is Self-sufficient cytochrome P450 monooxygenase CYP505E4 of Penicillium freii.